The following is a 508-amino-acid chain: MNEEQRKASGQVSSSDKKSEKDYSQYFEAVYIPPSLKDAKKRGKEEVEYNQFQIDERFQGLGNGRKFYIRTYGCQMNEHDTEVMAGIFMALGYEPTNSTEDANVILLNTCAIRENAENKVFGELGHLKALKREKPDLILGVCGCMSQEESVVNRILKKHPFVDLIFGTHNIHRLPELLSECYLSKEMVIEVWSKEGDVIENLPRARQGKIKGWVNIMYGCDKFCTYCIVPYTRGKERSRRPDEIIQEVRRLAAEGYKEITLLGQNVNAYGKDFEDMEYGLGHLMDELRKIDIPRIRFTTSHPRDFDDHLIEVLAKGGNLLDHIHLPVQSGSSSVLKLMARKYDRERYLDLVRKIKEAMPNASLTTDIIVGFPNETDEQFEETLSLYREVEFDAAYTFIYSPREGTPAAKMQDNVPMHVKKERLQRLNALVNEISAKKMKEYEGQTVEVLVEGESKNNPEILAGYTSKSKLVNFKAPKEAIGNIVKVKITQAKTWSLDGEMVGEAIEVN.

The interval 1–21 (MNEEQRKASGQVSSSDKKSEK) is disordered. Residues 65-183 (RKFYIRTYGC…LPELLSECYL (119 aa)) form the MTTase N-terminal domain. 6 residues coordinate [4Fe-4S] cluster: C74, C110, C144, C220, C224, and C227. One can recognise a Radical SAM core domain in the interval 206–436 (RQGKIKGWVN…NALVNEISAK (231 aa)). In terms of domain architecture, TRAM spans 439 to 502 (KEYEGQTVEV…TWSLDGEMVG (64 aa)).

The protein belongs to the methylthiotransferase family. MiaB subfamily. In terms of assembly, monomer. It depends on [4Fe-4S] cluster as a cofactor.

It localises to the cytoplasm. It carries out the reaction N(6)-dimethylallyladenosine(37) in tRNA + (sulfur carrier)-SH + AH2 + 2 S-adenosyl-L-methionine = 2-methylsulfanyl-N(6)-dimethylallyladenosine(37) in tRNA + (sulfur carrier)-H + 5'-deoxyadenosine + L-methionine + A + S-adenosyl-L-homocysteine + 2 H(+). In terms of biological role, catalyzes the methylthiolation of N6-(dimethylallyl)adenosine (i(6)A), leading to the formation of 2-methylthio-N6-(dimethylallyl)adenosine (ms(2)i(6)A) at position 37 in tRNAs that read codons beginning with uridine. This chain is tRNA-2-methylthio-N(6)-dimethylallyladenosine synthase, found in Bacillus pumilus (strain SAFR-032).